The sequence spans 556 residues: Phenylalanine--tRNA ligase beta subunit (556 aa).

Residues 274–349 enclose the B5 domain; sequence HEPEEMEVDL…ITLGLNKIGY (76 aa). Residues aspartate 327, aspartate 333, glutamate 336, and glutamate 337 each contribute to the Mg(2+) site.

This sequence belongs to the phenylalanyl-tRNA synthetase beta subunit family. Type 2 subfamily. Tetramer of two alpha and two beta subunits. The cofactor is Mg(2+).

The protein resides in the cytoplasm. The enzyme catalyses tRNA(Phe) + L-phenylalanine + ATP = L-phenylalanyl-tRNA(Phe) + AMP + diphosphate + H(+). This is Phenylalanine--tRNA ligase beta subunit from Korarchaeum cryptofilum (strain OPF8).